Reading from the N-terminus, the 268-residue chain is Glutamate racemase (268 aa).

Residues D9–S10 and Y41–G42 contribute to the substrate site. Catalysis depends on C73, which acts as the Proton donor/acceptor. N74 to S75 lines the substrate pocket. C183 serves as the catalytic Proton donor/acceptor. Position 184 to 185 (T184 to H185) interacts with substrate.

Belongs to the aspartate/glutamate racemases family.

It catalyses the reaction L-glutamate = D-glutamate. The protein operates within cell wall biogenesis; peptidoglycan biosynthesis. Provides the (R)-glutamate required for cell wall biosynthesis. The protein is Glutamate racemase of Shewanella pealeana (strain ATCC 700345 / ANG-SQ1).